A 438-amino-acid chain; its full sequence is Coenzyme A disulfide reductase (438 aa).

Residue 8-33 (GAVAGGATCASQIRRLDKESDIIIFE) coordinates FAD. Residues threonine 15, glutamine 19, arginine 22, serine 39, and asparagine 42 each contribute to the substrate site. Residue cysteine 43 is the Nucleophile of the active site. Catalysis depends on cysteine 43, which acts as the Redox-active. A substrate-binding site is contributed by lysine 71. 151 to 166 (VLVVGAGYVSLEVLEN) is a binding site for NADP(+). Residue 267 to 277 (TNVPNIYAIGD) participates in FAD binding. Residue histidine 299 coordinates substrate. Residue tyrosine 419 coordinates FAD. Residue lysine 427 participates in substrate binding.

This sequence belongs to the class-III pyridine nucleotide-disulfide oxidoreductase family. In terms of assembly, homodimer. Requires FAD as cofactor.

The enzyme catalyses NADP(+) + 2 CoA = CoA-disulfide + NADPH + H(+). Functionally, catalyzes specifically the NADPH-dependent reduction of coenzyme A disulfide. This is Coenzyme A disulfide reductase from Staphylococcus aureus (strain USA300).